The primary structure comprises 544 residues: Aspartokinase (544 aa).

Residues 463-535 form the ACT domain; that stretch reads LVGKQMVNFI…SAIGDSSAVD (73 aa).

It belongs to the aspartokinase family.

It catalyses the reaction L-aspartate + ATP = 4-phospho-L-aspartate + ADP. It participates in amino-acid biosynthesis; L-methionine biosynthesis via de novo pathway; L-homoserine from L-aspartate: step 1/3. Its pathway is amino-acid biosynthesis; L-threonine biosynthesis; L-threonine from L-aspartate: step 1/5. In terms of biological role, phosphorylates aspartate, the first step in the biosynthesis of amino acids that derive from aspartate (the aspartate family of amino acids), including methioinine and threonine, the latter of which is a precursor to isoleucine. In Candida albicans (strain SC5314 / ATCC MYA-2876) (Yeast), this protein is Aspartokinase.